Consider the following 148-residue polypeptide: Large ribosomal subunit protein bL9 (148 aa).

The protein belongs to the bacterial ribosomal protein bL9 family.

Binds to the 23S rRNA. This is Large ribosomal subunit protein bL9 from Bacillus cytotoxicus (strain DSM 22905 / CIP 110041 / 391-98 / NVH 391-98).